The primary structure comprises 333 residues: Bifunctional phosphoglucose/phosphomannose isomerase (333 aa).

Residues 22-160 form the SIS domain; the sequence is LEGALEGVEE…SGALGVDLEA (139 aa). Positions 39, 40, 84, 86, 89, and 136 each coordinate D-fructose 6-phosphate. The Proton acceptor role is filled by E211. D-fructose 6-phosphate-binding residues include H227 and K322. The active-site Proton donor is the H227. K322 functions as the Proton acceptor in the catalytic mechanism.

This sequence belongs to the PGI/PMI family. Homodimer.

The catalysed reaction is alpha-D-glucose 6-phosphate = beta-D-fructose 6-phosphate. It catalyses the reaction D-mannose 6-phosphate = D-fructose 6-phosphate. With respect to regulation, inhibited by low concentrations of erythrose 4-phosphate and 6-phosphogluconate. Functionally, dual specificity isomerase that catalyzes the isomerization of both glucose-6-phosphate and mannose-6-phosphate to fructose-6-phosphate with similar catalytic efficiency. The protein is Bifunctional phosphoglucose/phosphomannose isomerase of Aeropyrum pernix (strain ATCC 700893 / DSM 11879 / JCM 9820 / NBRC 100138 / K1).